We begin with the raw amino-acid sequence, 218 residues long: E3 ubiquitin-protein ligase MARCHF3 (218 aa).

The RING-CH-type zinc-finger motif lies at serine 63–glutamate 123. Residues cysteine 71, cysteine 74, cysteine 87, cysteine 89, histidine 97, cysteine 100, cysteine 113, and cysteine 116 each contribute to the Zn(2+) site. A run of 2 helical transmembrane segments spans residues leucine 145–leucine 165 and leucine 180–threonine 200.

In terms of assembly, interacts with MARCHF2 and STX6.

It localises to the cytoplasmic vesicle membrane. Its subcellular location is the early endosome membrane. The catalysed reaction is S-ubiquitinyl-[E2 ubiquitin-conjugating enzyme]-L-cysteine + [acceptor protein]-L-lysine = [E2 ubiquitin-conjugating enzyme]-L-cysteine + N(6)-ubiquitinyl-[acceptor protein]-L-lysine.. The protein operates within protein modification; protein ubiquitination. Functionally, E3 ubiquitin-protein ligase which may be involved in endosomal trafficking. E3 ubiquitin ligases accept ubiquitin from an E2 ubiquitin-conjugating enzyme in the form of a thioester and then directly transfer the ubiquitin to targeted substrates. This chain is E3 ubiquitin-protein ligase MARCHF3 (Marchf3), found in Mus musculus (Mouse).